A 473-amino-acid chain; its full sequence is Photosystem II CP43 reaction center protein (473 aa).

Residues 1–14 constitute a propeptide that is removed on maturation; the sequence is MKTLYSLRRFYHVE. At Thr-15 the chain carries N-acetylthreonine. Thr-15 carries the phosphothreonine modification. A run of 5 helical transmembrane segments spans residues 69-93, 134-155, 178-200, 255-275, and 291-312; these read LFEV…PHLA, LLGP…KDRN, KALY…RKIT, KPFA…LSYS, and WFNN…ASQA. Glu-367 is a [CaMn4O5] cluster binding site. The chain crosses the membrane as a helical span at residues 447-471; the sequence is RARAAAAGFEKGIDRDFEPVLSMTP.

Belongs to the PsbB/PsbC family. PsbC subfamily. PSII is composed of 1 copy each of membrane proteins PsbA, PsbB, PsbC, PsbD, PsbE, PsbF, PsbH, PsbI, PsbJ, PsbK, PsbL, PsbM, PsbT, PsbX, PsbY, PsbZ, Psb30/Ycf12, at least 3 peripheral proteins of the oxygen-evolving complex and a large number of cofactors. It forms dimeric complexes. The cofactor is Binds multiple chlorophylls and provides some of the ligands for the Ca-4Mn-5O cluster of the oxygen-evolving complex. It may also provide a ligand for a Cl- that is required for oxygen evolution. PSII binds additional chlorophylls, carotenoids and specific lipids..

The protein localises to the plastid. It is found in the chloroplast thylakoid membrane. Functionally, one of the components of the core complex of photosystem II (PSII). It binds chlorophyll and helps catalyze the primary light-induced photochemical processes of PSII. PSII is a light-driven water:plastoquinone oxidoreductase, using light energy to abstract electrons from H(2)O, generating O(2) and a proton gradient subsequently used for ATP formation. This chain is Photosystem II CP43 reaction center protein, found in Phaseolus vulgaris (Kidney bean).